A 577-amino-acid chain; its full sequence is Cell adhesion molecule CEACAM20 (577 aa).

Positions 1 to 30 (MELAGFHCCSWTVILLSALLPTTWRPPAAA) are cleaved as a signal peptide. Residues 31-430 (HFIHRADLLS…LQSSSMSPGA (400 aa)) are Extracellular-facing. Ig-like C2-type domains follow at residues 48–137 (PLAK…ASLT), 142–223 (PDPV…TNLS), 239–324 (PNIE…LKLT), and 329–415 (PDQV…ASVL). Cys72 and Cys120 are disulfide-bonded. N-linked (GlcNAc...) asparagine glycans are attached at residues Asn78 and Asn102. 2 cysteine pairs are disulfide-bonded: Cys259–Cys307 and Cys358–Cys399. N-linked (GlcNAc...) asparagine glycosylation occurs at Asn289. A helical transmembrane segment spans residues 431–451 (IAGIVIGILVAIALAIGLGYF). The Cytoplasmic segment spans residues 452 to 577 (LYSTKDRWTR…SLYCKITPSA (126 aa)). Residues 461 to 568 (RRRSASDTTS…YEKLLNSNHS (108 aa)) are disordered. A compositionally biased stretch (polar residues) spans 474–484 (IPPTSVMQSTP). The segment covering 516 to 526 (DSPEQFYEKKP) has biased composition (basic and acidic residues). The segment covering 536–551 (KPLPQIPKQPLMPPGP) has biased composition (pro residues). Phosphotyrosine is present on residues Tyr559 and Tyr570.

The protein belongs to the immunoglobulin superfamily. CEA family. In terms of assembly, interacts (via extracellular domain) with PTPRH (via extracellular domain); the interaction dephosphorylates CEACAM20. Interacts (phosphorylated form) with SYK (via SH2 domains); the interaction further enhances CEACAM20 phosphorylation. In terms of processing, phosphorylated on tyrosine residues by SYK, SRC and FYN in vitro. In terms of tissue distribution, strongly expressed in the small intestine and colon (at protein level). Minimal expression in other tissues (at protein level). Highly expressed in cecum, colon, ileum, jejunum, and testis, and also detected at lower levels in salivary gland and thymus.

It localises to the cell projection. The protein localises to the microvillus membrane. Its subcellular location is the apical cell membrane. Functionally, together with the tyrosine-protein kinase SYK, enhances production of the cytokine CXCL8/IL-8 via the NFKB pathway and may thus have a role in the intestinal immune response. This is Cell adhesion molecule CEACAM20 from Mus musculus (Mouse).